We begin with the raw amino-acid sequence, 480 residues long: UDP-glycosyltransferase 72B2 (480 aa).

Residues S277, 347–349 (APQ), 364–372 (HCGWNSTLE), and 386–389 (FAEQ) each bind UDP-alpha-D-glucose.

Belongs to the UDP-glycosyltransferase family.

This chain is UDP-glycosyltransferase 72B2 (UGT72B2), found in Arabidopsis thaliana (Mouse-ear cress).